A 411-amino-acid chain; its full sequence is Class E basic helix-loop-helix protein 40 (411 aa).

Residues 1–21 (MERIPSAQPPPTCLPKTPGLE) form a disordered region. Positions 1-139 (MERIPSAQPP…LSGKNIEAGQ (139 aa)) are essential for interaction with BMAL1, E-box binding and repressor activity against the CLOCK-BMAL1 heterodimer. The bHLH domain occupies 52–107 (TYKLPHRLIEKKRRDRINECIAQLKDLLPEHLKLTTLGHLEKAVVLELTLKHVKAL). The segment at 75–79 (LKDLL) is necessary for interaction with RXRA and repressor activity against RXRA. Positions 142–175 (FCSGFQTCAREVLQYLAKHENTRDLKSSQLVTHL) constitute an Orange domain. A Glycyl lysine isopeptide (Lys-Gly) (interchain with G-Cter in SUMO1, SUMO2 and SUMO3) cross-link involves residue Lys159. Residue Lys167 forms a Glycyl lysine isopeptide (Lys-Gly) (interchain with G-Cter in SUMO2) linkage. The disordered stretch occupies residues 186–293 (SASRKPLDSA…EPPTKKSRMQ (108 aa)). Ser235 is modified (phosphoserine). A compositionally biased stretch (basic and acidic residues) spans 248–271 (ELEKGDLRSEQPYFKSDHGRRFTV). Lys279 participates in a covalent cross-link: Glycyl lysine isopeptide (Lys-Gly) (interchain with G-Cter in SUMO1); alternate. Residue Lys279 forms a Glycyl lysine isopeptide (Lys-Gly) (interchain with G-Cter in SUMO1, SUMO2 and SUMO3); alternate linkage. A Glycyl lysine isopeptide (Lys-Gly) (interchain with G-Cter in SUMO2); alternate cross-link involves residue Lys279. Lys288 participates in a covalent cross-link: Glycyl lysine isopeptide (Lys-Gly) (interchain with G-Cter in SUMO2). Ser383 is subject to Phosphoserine.

Homodimer. Heterodimer with BHLHE41/DEC2. Interacts with TCF3/E47. Interacts with ubiquitin-conjugating enzyme UBE2I/UBC9. Interacts with HDAC1, SUMO1, RXRA and BMAL1. Ubiquitinated; which may lead to proteasomal degradation. Post-translationally, sumoylation inhibits its ubiquitination and promotes its negative regulation of the CLOCK-BMAL1 heterodimer transcriptional activator activity. As to expression, expressed in heart, spleen, lung, liver, muscle, kidney, uterus and gut. Highly expressed in the cerebral cortex, especially in the fifth layer, thalamus, superior colliculus, olfactory bulb, piriform cortex, hippocampus and hypothalamic nuclei.

The protein resides in the cytoplasm. It localises to the nucleus. In terms of biological role, transcriptional repressor involved in the regulation of the circadian rhythm by negatively regulating the activity of the clock genes and clock-controlled genes. Acts as the negative limb of a novel autoregulatory feedback loop (DEC loop) which differs from the one formed by the PER and CRY transcriptional repressors (PER/CRY loop). Both these loops are interlocked as it represses the expression of PER1/2 and in turn is repressed by PER1/2 and CRY1/2. Represses the activity of the circadian transcriptional activator: CLOCK-BMAL1|BMAL2 heterodimer by competing for the binding to E-box elements (5'-CACGTG-3') found within the promoters of its target genes. Negatively regulates its own expression and the expression of DBP and BHLHE41/DEC2. Acts as a corepressor of RXR and the RXR-LXR heterodimers and represses the ligand-induced RXRA and NR1H3/LXRA transactivation activity. May be involved in the regulation of chondrocyte differentiation via the cAMP pathway. Represses the transcription of NR0B2 and attentuates the transactivation of NR0B2 by the CLOCK-BMAL1 complex. Drives the circadian rhythm of blood pressure through transcriptional repression of ATP1B1 in the cardiovascular system. The sequence is that of Class E basic helix-loop-helix protein 40 (Bhlhe40) from Rattus norvegicus (Rat).